The following is a 275-amino-acid chain: Uronate dehydrogenase (275 aa).

NAD(+)-binding positions include 22–23, 42–44, 60–61, and 80–84; these read GL, DIA, DL, and FGGVS. Substrate is bound by residues Ser-84 and 120–122; that span reads SNH. Residue Tyr-145 is the Proton acceptor of the active site. Lys-149 contacts NAD(+). Ser-174 provides a ligand contact to substrate. Ser-175 provides a ligand contact to NAD(+). Residue Arg-183 participates in substrate binding.

It belongs to the NAD(P)-dependent epimerase/dehydratase family. Homohexamer.

It carries out the reaction beta-D-galacturonate + NAD(+) = D-galactaro-1,5-lactone + NADH + H(+). The enzyme catalyses beta-D-glucuronate + NAD(+) = D-glucaro-1,5-lactone + NADH + H(+). The protein operates within carbohydrate acid metabolism; D-galacturonate degradation via prokaryotic oxidative pathway. In terms of biological role, catalyzes the oxidation of beta-D-galacturonate and beta-D-glucuronate to galactarate and D-glucarate, respectively. Cannot use NADP(+) instead of NAD(+) as cosubstrate. The polypeptide is Uronate dehydrogenase (udh) (Pseudomonas syringae pv. tomato (strain ATCC BAA-871 / DC3000)).